We begin with the raw amino-acid sequence, 430 residues long: Serine--tRNA ligase (430 aa).

237–239 is an L-serine binding site; that stretch reads TAE. An ATP-binding site is contributed by 268–270; sequence RSE. E291 contacts L-serine. 355-358 lines the ATP pocket; that stretch reads EISS. S391 contributes to the L-serine binding site.

It belongs to the class-II aminoacyl-tRNA synthetase family. Type-1 seryl-tRNA synthetase subfamily. Homodimer. The tRNA molecule binds across the dimer.

Its subcellular location is the cytoplasm. It carries out the reaction tRNA(Ser) + L-serine + ATP = L-seryl-tRNA(Ser) + AMP + diphosphate + H(+). The catalysed reaction is tRNA(Sec) + L-serine + ATP = L-seryl-tRNA(Sec) + AMP + diphosphate + H(+). The protein operates within aminoacyl-tRNA biosynthesis; selenocysteinyl-tRNA(Sec) biosynthesis; L-seryl-tRNA(Sec) from L-serine and tRNA(Sec): step 1/1. Its function is as follows. Catalyzes the attachment of serine to tRNA(Ser). Is also able to aminoacylate tRNA(Sec) with serine, to form the misacylated tRNA L-seryl-tRNA(Sec), which will be further converted into selenocysteinyl-tRNA(Sec). The protein is Serine--tRNA ligase of Shigella dysenteriae serotype 1 (strain Sd197).